The sequence spans 294 residues: 4-hydroxy-tetrahydrodipicolinate synthase (294 aa).

Threonine 47 contributes to the pyruvate binding site. The active-site Proton donor/acceptor is the tyrosine 135. Catalysis depends on lysine 163, which acts as the Schiff-base intermediate with substrate. Threonine 205 provides a ligand contact to pyruvate.

It belongs to the DapA family. In terms of assembly, homotetramer; dimer of dimers.

It is found in the cytoplasm. It catalyses the reaction L-aspartate 4-semialdehyde + pyruvate = (2S,4S)-4-hydroxy-2,3,4,5-tetrahydrodipicolinate + H2O + H(+). It participates in amino-acid biosynthesis; L-lysine biosynthesis via DAP pathway; (S)-tetrahydrodipicolinate from L-aspartate: step 3/4. Its function is as follows. Catalyzes the condensation of (S)-aspartate-beta-semialdehyde [(S)-ASA] and pyruvate to 4-hydroxy-tetrahydrodipicolinate (HTPA). This chain is 4-hydroxy-tetrahydrodipicolinate synthase, found in Rickettsia akari (strain Hartford).